A 638-amino-acid polypeptide reads, in one-letter code: MLVLFETSAGFALFKVLDEGKMKSKPVDINNFFETPEKASSFVSLKKFYKFDGTLDALEAQTAIAECKVPESLSNFLKKNVVSEKLNEQLIVSDSKFGNAIKDALNIKVLCDDTTQELIRGIRLQLKSLVNANEQDLNAMSIGLSHSYSRYKLKFSPDKVDTMIVQAISLLDDLTTEINIYAMRAREWYGWHFPELGKLITNHTQYANAIKAMGNRKSAVDTDFTDILPEEVAEEVKEAAQISMGTEISPEDLDHIFALCDQFLSIQAYHTELTEYLKSRMEAIAPNLTILVGEIVGARLICRAGSLMNLAKYPASTIQILGAEKALFRALKTKHNTPKYGLIYNAKIVGEASLKNKGKMSRVLAAKAALSARFDALCEVSDTSYGIAYKGAVDRRAAAIEGREVRKSLNAVKPEKSGNVAKYDHTKSATTNTTRDVATKSSKESSIKQEKQDVKMEEASSSDSDSSSDSDSSEEEKSKKSKKSKKEETPVAKEEKKEKKSKKEETPVAKEEKKEKEEKKEKKDKKEKKEEKEDKKEEKKEKKDKKEKTEETPVAKEEKKEKKEKKEEKEEKKDKKEKKEKKEEKEEKKEKKEKKSSSKEDKKEKEEKKEKKSSSKEDKKRKDRDEEPEEKKSKKSKK.

In terms of domain architecture, Nop spans 284-402 (IAPNLTILVG…VDRRAAAIEG (119 aa)). Positions 416–638 (KSGNVAKYDH…EEKKSKKSKK (223 aa)) are disordered. 4 stretches are compositionally biased toward basic and acidic residues: residues 437–458 (VATKSSKESSIKQEKQDVKMEE), 485–521 (KKEETPVAKEEKKEKKSKKEETPVAKEEKKEKEEKKE), 527–574 (EKKE…EKKD), and 580–632 (EKKE…EEKK).

The protein belongs to the NOP5/NOP56 family.

Its subcellular location is the nucleus. It localises to the nucleolus. Its function is as follows. Involved in the biogenesis of box C/D snoRNAs. Part of the small subunit (SSU) processome, first precursor of the small eukaryotic ribosomal subunit. Could function in the small subunit (SSU) processome, first precursor of the small eukaryotic ribosomal subunit. During the assembly of the SSU processome in the nucleolus, many ribosome biogenesis factors, an RNA chaperone and ribosomal proteins associate with the nascent pre-rRNA and work in concert to generate RNA folding, modifications, rearrangements and cleavage as well as targeted degradation of pre-ribosomal RNA by the RNA exosome. As a component of box C/D small nucleolar ribonucleoprotein (snoRNP) complexes could function in methylation of ribosomal RNAs (rRNAs). The chain is Nucleolar protein 58 (nop58) from Dictyostelium discoideum (Social amoeba).